Consider the following 403-residue polypeptide: Non-structural maintenance of chromosomes element 4 homolog A (403 aa).

A compositionally biased stretch (basic and acidic residues) spans methionine 1–glutamate 45. Disordered regions lie at residues methionine 1–serine 57, leucine 194–threonine 226, and serine 342–serine 403. A compositionally biased stretch (basic residues) spans glutamine 196–threonine 206. Low complexity predominate over residues serine 342–alanine 353. The segment covering aspartate 354–proline 363 has biased composition (polar residues). The span at threonine 384–arginine 393 shows a compositional bias: basic and acidic residues. The span at arginine 394 to serine 403 shows a compositional bias: basic residues.

This sequence belongs to the NSE4 family. Interacts with SMC5, SMC6A or SMC6B. The SMC5-SMC6 complex is composed of the SMC5 and SMC6 heterodimer attached via their hinge domain and from the non-SMC subunit NSE4A or NSE4B. As to expression, expressed in seedlings, rosette leaves and floral buds.

The protein localises to the nucleus. Its function is as follows. Component of the SMC5-SMC6 complex, that promotes sister chromatid alignment after DNA damage and facilitates double-stranded DNA breaks (DSBs) repair via homologous recombination between sister chromatids. This Arabidopsis thaliana (Mouse-ear cress) protein is Non-structural maintenance of chromosomes element 4 homolog A (NSE4A).